Consider the following 311-residue polypeptide: Ribosomal RNA small subunit methyltransferase H (311 aa).

Residues 32–34 (AGH), Asp-52, Phe-79, Asp-100, and Gln-107 each bind S-adenosyl-L-methionine.

Belongs to the methyltransferase superfamily. RsmH family.

It localises to the cytoplasm. It carries out the reaction cytidine(1402) in 16S rRNA + S-adenosyl-L-methionine = N(4)-methylcytidine(1402) in 16S rRNA + S-adenosyl-L-homocysteine + H(+). Specifically methylates the N4 position of cytidine in position 1402 (C1402) of 16S rRNA. The chain is Ribosomal RNA small subunit methyltransferase H from Staphylococcus aureus (strain Mu3 / ATCC 700698).